Consider the following 332-residue polypeptide: Glycerol-3-phosphate dehydrogenase [NAD(P)+] (332 aa).

Residues serine 11, tryptophan 12, arginine 32, arginine 33, and lysine 106 each contribute to the NADPH site. Residues lysine 106 and glycine 136 each coordinate sn-glycerol 3-phosphate. NADPH is bound at residue alanine 140. Lysine 191, aspartate 244, serine 254, arginine 255, and asparagine 256 together coordinate sn-glycerol 3-phosphate. Catalysis depends on lysine 191, which acts as the Proton acceptor. Arginine 255 contributes to the NADPH binding site. Residues valine 280 and glutamate 282 each coordinate NADPH.

The protein belongs to the NAD-dependent glycerol-3-phosphate dehydrogenase family.

Its subcellular location is the cytoplasm. The enzyme catalyses sn-glycerol 3-phosphate + NAD(+) = dihydroxyacetone phosphate + NADH + H(+). The catalysed reaction is sn-glycerol 3-phosphate + NADP(+) = dihydroxyacetone phosphate + NADPH + H(+). The protein operates within membrane lipid metabolism; glycerophospholipid metabolism. Its function is as follows. Catalyzes the reduction of the glycolytic intermediate dihydroxyacetone phosphate (DHAP) to sn-glycerol 3-phosphate (G3P), the key precursor for phospholipid synthesis. The polypeptide is Glycerol-3-phosphate dehydrogenase [NAD(P)+] (Corynebacterium glutamicum (strain R)).